The primary structure comprises 270 residues: tRNA pseudouridine synthase A (270 aa).

The Nucleophile role is filled by Asp60. Residues 107–111 (FHARF) form an RNA binding region. Tyr118 contacts substrate. Residues 168-172 (QCQSR) are interaction with tRNA.

This sequence belongs to the tRNA pseudouridine synthase TruA family. Homodimer.

It catalyses the reaction uridine(38/39/40) in tRNA = pseudouridine(38/39/40) in tRNA. Functionally, formation of pseudouridine at positions 38, 39 and 40 in the anticodon stem and loop of transfer RNAs. In Escherichia fergusonii (strain ATCC 35469 / DSM 13698 / CCUG 18766 / IAM 14443 / JCM 21226 / LMG 7866 / NBRC 102419 / NCTC 12128 / CDC 0568-73), this protein is tRNA pseudouridine synthase A.